The following is a 463-amino-acid chain: L-seryl-tRNA(Sec) selenium transferase (463 aa).

N6-(pyridoxal phosphate)lysine is present on K295.

The protein belongs to the SelA family. As to quaternary structure, homodecamer; pentamer of dimers. Binds only one seryl-tRNA(Sec) per dimer. Pyridoxal 5'-phosphate serves as cofactor.

The protein localises to the cytoplasm. The enzyme catalyses L-seryl-tRNA(Sec) + selenophosphate + H(+) = L-selenocysteinyl-tRNA(Sec) + phosphate. The protein operates within aminoacyl-tRNA biosynthesis; selenocysteinyl-tRNA(Sec) biosynthesis; selenocysteinyl-tRNA(Sec) from L-seryl-tRNA(Sec) (bacterial route): step 1/1. In terms of biological role, converts seryl-tRNA(Sec) to selenocysteinyl-tRNA(Sec) required for selenoprotein biosynthesis. In Escherichia coli O6:H1 (strain CFT073 / ATCC 700928 / UPEC), this protein is L-seryl-tRNA(Sec) selenium transferase.